We begin with the raw amino-acid sequence, 293 residues long: 33 kDa chaperonin (293 aa).

Intrachain disulfides connect C237–C239 and C271–C274.

Belongs to the HSP33 family. Post-translationally, under oxidizing conditions two disulfide bonds are formed involving the reactive cysteines. Under reducing conditions zinc is bound to the reactive cysteines and the protein is inactive.

It localises to the cytoplasm. Its function is as follows. Redox regulated molecular chaperone. Protects both thermally unfolding and oxidatively damaged proteins from irreversible aggregation. Plays an important role in the bacterial defense system toward oxidative stress. In Haemophilus influenzae (strain ATCC 51907 / DSM 11121 / KW20 / Rd), this protein is 33 kDa chaperonin.